The primary structure comprises 116 residues: Cation channel sperm-associated auxiliary subunit TMEM262 (116 aa).

The Cytoplasmic portion of the chain corresponds to 1–16 (MWLQDRIATFFFPKGM). The chain crosses the membrane as a helical span at residues 17 to 38 (MLTTAALMLFFLHLGIFIRDVH). Topologically, residues 39 to 51 (NFCITYHYDHMSF) are extracellular. A helical transmembrane segment spans residues 52 to 72 (HYTVVLMFSQVISICWAAMGS). Over 73 to 84 (LYAEMTENKYVC) the chain is Cytoplasmic. Residues 85-107 (FSALTILMLNGAMFFNRLSLEFL) form a helical membrane-spanning segment. Residues 108–116 (AIEYREEHH) are Extracellular-facing.

As to quaternary structure, component of the CatSper complex or CatSpermasome composed of the core pore-forming members CATSPER1, CATSPER2, CATSPER3 and CATSPER4 as well as auxiliary members CATSPERB, CATSPERG, CATSPERD, CATSPERE, CATSPERZ, C2CD6/CATSPERT, TMEM249, TMEM262 and EFCAB9. HSPA1 may be an additional auxiliary complex member. The core complex members CATSPER1, CATSPER2, CATSPER3 and CATSPER4 form a heterotetrameric channel. The auxiliary CATSPERB, CATSPERG, CATSPERD and CATSPERE subunits form a pavilion-like structure over the pore which stabilizes the complex through interactions with CATSPER4, CATSPER3, CATSPER1 and CATSPER2 respectively. TMEM262/CATSPERH interacts with CATSPERB, further stabilizing the complex. C2CD6/CATSPERT interacts at least with CATSPERD and is required for targeting the CatSper complex in the flagellar membrane.

Its subcellular location is the cell projection. The protein resides in the cilium. It is found in the flagellum membrane. Auxiliary component of the CatSper complex, a complex involved in sperm cell hyperactivation. The protein is Cation channel sperm-associated auxiliary subunit TMEM262 of Homo sapiens (Human).